The sequence spans 364 residues: Chorismate synthase (364 aa).

An NADP(+)-binding site is contributed by arginine 48. FMN contacts are provided by residues 125-127 (RSS), 237-238 (NA), glycine 277, 292-296 (KPTSS), and arginine 318.

It belongs to the chorismate synthase family. As to quaternary structure, homotetramer. Requires FMNH2 as cofactor.

The catalysed reaction is 5-O-(1-carboxyvinyl)-3-phosphoshikimate = chorismate + phosphate. It functions in the pathway metabolic intermediate biosynthesis; chorismate biosynthesis; chorismate from D-erythrose 4-phosphate and phosphoenolpyruvate: step 7/7. Its function is as follows. Catalyzes the anti-1,4-elimination of the C-3 phosphate and the C-6 proR hydrogen from 5-enolpyruvylshikimate-3-phosphate (EPSP) to yield chorismate, which is the branch point compound that serves as the starting substrate for the three terminal pathways of aromatic amino acid biosynthesis. This reaction introduces a second double bond into the aromatic ring system. This Albidiferax ferrireducens (strain ATCC BAA-621 / DSM 15236 / T118) (Rhodoferax ferrireducens) protein is Chorismate synthase.